A 116-amino-acid chain; its full sequence is Staphylococcal complement inhibitor (116 aa).

A signal peptide spans 1–31; the sequence is MKIRKSILAGTLAIVLASPLVTNLDKNEAQA. The tract at residues 62-79 is essential for activity; that stretch reads LATGSLNTYYKRTIKISG.

It belongs to the SCIN family.

It is found in the secreted. In terms of biological role, involved in countering the first line of host defense mechanisms. Efficiently inhibits opsonization, phagocytosis and killing of S.aureus by human neutrophils. Acts by binding and stabilizing human C3 convertases (C4b2a and C3bBb), leading to their inactivation. The convertases are no longer able to cleave complement C3, therefore preventing further C3b deposition on the bacterial surface and phagocytosis of the bacterium. Also prevents C5a-induced neutrophil responses. In Staphylococcus aureus (strain N315), this protein is Staphylococcal complement inhibitor (scn).